The primary structure comprises 264 residues: 2-dehydro-3-deoxy-D-gluconate 5-dehydrogenase (264 aa).

14-38 is an NAD(+) binding site; it reads LVTGSTHGLGMAMAKGLGLAGATIV. A substrate-binding site is contributed by serine 147. The active-site Proton acceptor is the tyrosine 160.

Belongs to the short-chain dehydrogenases/reductases (SDR) family. Homotetramer.

It is found in the cytoplasm. The catalysed reaction is 2-dehydro-3-deoxy-D-gluconate + NAD(+) = 3-deoxy-D-glycero-2,5-hexodiulosonate + NADH + H(+). 2-dehydro-3-deoxy-D-gluconate 5-dehydrogenase involved in ulvan degradation. Ulvan is the main polysaccharide component of the Ulvales (green seaweed) cell wall. It is composed of disaccharide building blocks comprising 3-sulfated rhamnose (Rha3S) linked to D-glucuronic acid (GlcA), L-iduronic acid (IduA), or D-xylose (Xyl). Catalyzes the reversible reduction of 2,5-diketo-3-deoxygluconate (DKII or 4,6-dihydroxy-2,5-dioxohexanoate) into 2-keto-3-deoxygluconate (KDG or 2-dehydro-3-deoxygluconate) with a concomitant oxidation of NADH. The sequence is that of 2-dehydro-3-deoxy-D-gluconate 5-dehydrogenase (kduD) from Formosa agariphila (strain DSM 15362 / KCTC 12365 / LMG 23005 / KMM 3901 / M-2Alg 35-1).